Reading from the N-terminus, the 340-residue chain is Organic solute transporter subunit alpha (340 aa).

The Extracellular portion of the chain corresponds to 1 to 48; it reads MEPGRTHIKLDPRYTAELLELLETNYSISPACFSHPPTAAQLLRALGP. N-linked (GlcNAc...) asparagine glycosylation occurs at Asn-25. The chain crosses the membrane as a helical span at residues 49 to 69; sequence VDIALTIILTFLTTGSVAIFL. The Cytoplasmic portion of the chain corresponds to 70 to 87; it reads EDAVYLYKNTLCPIKKRT. Residues 88–108 form a helical membrane-spanning segment; that stretch reads LIWSSSAPTVVSVFCCFGLWI. At 109 to 114 the chain is on the extracellular side; sequence PRALTL. A helical transmembrane segment spans residues 115-135; that stretch reads VEMAITSFYAVCFYLLMMVMV. At 136–181 the chain is on the cytoplasmic side; sequence EGFGGKKAVLRTLKDTPMRVHTGPCCCCCPCCPPLILTRKKLQLLL. The helical transmembrane segment at 182–202 threads the bilayer; the sequence is LGPFQYAFFKITLSIVGLFLI. The Extracellular portion of the chain corresponds to 203 to 219; that stretch reads PDGIYDPGEISEKSAAL. The helical transmembrane segment at 220–240 threads the bilayer; that stretch reads WINNLLAVSTLLALWSLAILF. Residues 241 to 255 lie on the Cytoplasmic side of the membrane; that stretch reads RQAKMHLGEQNMGSK. The helical transmembrane segment at 256-276 threads the bilayer; that stretch reads FALFQVLVILTALQPAIFSIL. At 277 to 297 the chain is on the extracellular side; sequence ANSGQIACSPPYSSKIRSQVM. The chain crosses the membrane as a helical span at residues 298–317; the sequence is NCHMLILETFLMTVLTRMYY. Topologically, residues 318–340 are cytoplasmic; it reads RRKDDKVGYEACSLPDLDSALKA. A Phosphoserine modification is found at Ser-330.

The protein belongs to the OST-alpha family. Interacts with SLC51B. The Ost-alpha/Ost-beta complex is a heterodimer composed of alpha (SLC51A) and beta (SLC51B) subunit. In terms of processing, N-glycosylated. As to expression, present at high levels in ileum. In ileum, it is restricted to the apical domain on the mature villus enterocytes with little detectable expression in the goblet cells or crypt enterocytes (at protein level). Expressed in kidney but not in heart, brain, liver, spleen, embryo, lung, thymus, ovary nor testis.

It localises to the cell membrane. The protein resides in the endoplasmic reticulum membrane. It catalyses the reaction taurocholate(out) = taurocholate(in). The enzyme catalyses tauroursodeoxycholate(out) = tauroursodeoxycholate(in). It carries out the reaction glycoursodeoxycholate(out) = glycoursodeoxycholate(in). The catalysed reaction is glycocholate(out) = glycocholate(in). It catalyses the reaction taurochenodeoxycholate(out) = taurochenodeoxycholate(in). The enzyme catalyses glycochenodeoxycholate(out) = glycochenodeoxycholate(in). It carries out the reaction taurodeoxycholate(out) = taurodeoxycholate(in). The catalysed reaction is glycodeoxycholate(out) = glycodeoxycholate(in). It catalyses the reaction prostaglandin E2(out) = prostaglandin E2(in). The enzyme catalyses estrone 3-sulfate(out) = estrone 3-sulfate(in). It carries out the reaction dehydroepiandrosterone 3-sulfate(out) = dehydroepiandrosterone 3-sulfate(in). Essential component of the Ost-alpha/Ost-beta complex, a heterodimer that acts as the intestinal basolateral transporter responsible for bile acid export from enterocytes into portal blood. Efficiently transports the major species of bile acids (taurocholate). Taurine conjugates are transported more efficiently across the basolateral membrane than glycine-conjugated bile acids. Can also transport steroids such as estrone 3-sulfate and dehydroepiandrosterone 3-sulfate, therefore playing a role in the enterohepatic circulation of sterols. Able to transport eicosanoids such as prostaglandin E2. The protein is Organic solute transporter subunit alpha (Slc51a) of Mus musculus (Mouse).